A 96-amino-acid polypeptide reads, in one-letter code: Co-chaperonin GroES (96 aa).

The protein belongs to the GroES chaperonin family. Heptamer of 7 subunits arranged in a ring. Interacts with the chaperonin GroEL.

Its subcellular location is the cytoplasm. Functionally, together with the chaperonin GroEL, plays an essential role in assisting protein folding. The GroEL-GroES system forms a nano-cage that allows encapsulation of the non-native substrate proteins and provides a physical environment optimized to promote and accelerate protein folding. GroES binds to the apical surface of the GroEL ring, thereby capping the opening of the GroEL channel. The polypeptide is Co-chaperonin GroES (Paracidovorax citrulli (strain AAC00-1) (Acidovorax citrulli)).